Reading from the N-terminus, the 191-residue chain is MGTWILFACLLGAAFAMPLPPHPGHPGYINFSYEVLTPLKWYQSIRPPYPSYGYEPMGGWLHHQIIPVLSQQHPPTHTLQPHHHIPVVPAQQPVIPQQPMMPVPGQHSMTPIQHHQPNLPPPAQQPYQPQPVQPQPHQPMQPQPPVHPMQPLPPQPPLPPMFPMQPLPPMLPDLTLEAWPSTDKTKREEVD.

A signal peptide spans 1-16 (MGTWILFACLLGAAFA). Ser-32 carries the post-translational modification Phosphoserine. The span at 95–117 (IPQQPMMPVPGQHSMTPIQHHQP) shows a compositional bias: low complexity. The segment at 95 to 191 (IPQQPMMPVP…TDKTKREEVD (97 aa)) is disordered. The span at 118–171 (NLPPPAQQPYQPQPVQPQPHQPMQPQPPVHPMQPLPPQPPLPPMFPMQPLPPML) shows a compositional bias: pro residues.

This sequence belongs to the amelogenin family. In terms of assembly, interacts with KRT5. In terms of processing, phosphorylated by FAM20C in vitro.

It localises to the secreted. It is found in the extracellular space. The protein localises to the extracellular matrix. Functionally, plays a role in biomineralization. Seems to regulate the formation of crystallites during the secretory stage of tooth enamel development. Thought to play a major role in the structural organization and mineralization of developing enamel. This is Amelogenin, X isoform (AMELX) from Homo sapiens (Human).